The chain runs to 1270 residues: DNA-directed RNA polymerase subunit beta (1270 aa).

This sequence belongs to the RNA polymerase beta chain family. The RNAP catalytic core consists of 2 alpha, 1 beta, 1 beta' and 1 omega subunit. When a sigma factor is associated with the core the holoenzyme is formed, which can initiate transcription.

The catalysed reaction is RNA(n) + a ribonucleoside 5'-triphosphate = RNA(n+1) + diphosphate. In terms of biological role, DNA-dependent RNA polymerase catalyzes the transcription of DNA into RNA using the four ribonucleoside triphosphates as substrates. The protein is DNA-directed RNA polymerase subunit beta of Porphyromonas cangingivalis.